A 195-amino-acid chain; its full sequence is Putative EGF-like and EMI domain-containing protein 1 (195 aa).

The EGF-like domain maps to 86–97 (CTCKSGYQGNRC).

This is Putative EGF-like and EMI domain-containing protein 1 (EGFEM1P) from Homo sapiens (Human).